A 129-amino-acid polypeptide reads, in one-letter code: Prefoldin subunit 4 (129 aa).

At Met-1 the chain carries N-acetylmethionine.

Belongs to the prefoldin subunit beta family. As to quaternary structure, heterohexamer of two PFD-alpha type and four PFD-beta type subunits.

Functionally, binds specifically to cytosolic chaperonin (c-CPN) and transfers target proteins to it. Binds to nascent polypeptide chain and promotes folding in an environment in which there are many competing pathways for nonnative proteins. In Saccharomyces cerevisiae (strain ATCC 204508 / S288c) (Baker's yeast), this protein is Prefoldin subunit 4 (GIM3).